The following is a 149-amino-acid chain: Large ribosomal subunit protein uL22c (149 aa).

Belongs to the universal ribosomal protein uL22 family. As to quaternary structure, part of the 50S ribosomal subunit.

The protein resides in the plastid. It is found in the chloroplast. Its function is as follows. This protein binds specifically to 23S rRNA. Functionally, the globular domain of the protein is located near the polypeptide exit tunnel on the outside of the subunit, while an extended beta-hairpin is found that lines the wall of the exit tunnel in the center of the 70S ribosome. The sequence is that of Large ribosomal subunit protein uL22c (rpl22) from Oryza nivara (Indian wild rice).